A 279-amino-acid chain; its full sequence is Urease accessory protein UreD (279 aa).

Belongs to the UreD family. In terms of assembly, ureD, UreF and UreG form a complex that acts as a GTP-hydrolysis-dependent molecular chaperone, activating the urease apoprotein by helping to assemble the nickel containing metallocenter of UreC. The UreE protein probably delivers the nickel.

Its subcellular location is the cytoplasm. In terms of biological role, required for maturation of urease via the functional incorporation of the urease nickel metallocenter. In Brucella suis (strain ATCC 23445 / NCTC 10510), this protein is Urease accessory protein UreD.